Here is a 220-residue protein sequence, read N- to C-terminus: Ribonuclease HII (220 aa).

One can recognise an RNase H type-2 domain in the interval 32–220 (KHIAGIDEAG…FAPIKGCFDC (189 aa)). 3 residues coordinate a divalent metal cation: Asp38, Glu39, and Asp130.

It belongs to the RNase HII family. Mn(2+) serves as cofactor. Requires Mg(2+) as cofactor.

It localises to the cytoplasm. It carries out the reaction Endonucleolytic cleavage to 5'-phosphomonoester.. Its function is as follows. Endonuclease that specifically degrades the RNA of RNA-DNA hybrids. This chain is Ribonuclease HII, found in Brucella abortus (strain 2308).